The following is a 194-amino-acid chain: Probable molybdenum cofactor guanylyltransferase (194 aa).

Residues 8-10 (LAG), Lys-20, and Asp-99 each bind GTP. Asp-99 serves as a coordination point for Mg(2+).

The protein belongs to the MobA family. Mg(2+) is required as a cofactor.

The protein resides in the cytoplasm. It carries out the reaction Mo-molybdopterin + GTP + H(+) = Mo-molybdopterin guanine dinucleotide + diphosphate. Functionally, transfers a GMP moiety from GTP to Mo-molybdopterin (Mo-MPT) cofactor (Moco or molybdenum cofactor) to form Mo-molybdopterin guanine dinucleotide (Mo-MGD) cofactor. The chain is Probable molybdenum cofactor guanylyltransferase from Synechococcus elongatus (strain ATCC 33912 / PCC 7942 / FACHB-805) (Anacystis nidulans R2).